Here is a 257-residue protein sequence, read N- to C-terminus: Imidazole glycerol phosphate synthase subunit HisF (257 aa).

Catalysis depends on residues Asp-12 and Asp-131.

It belongs to the HisA/HisF family. Heterodimer of HisH and HisF.

It localises to the cytoplasm. The catalysed reaction is 5-[(5-phospho-1-deoxy-D-ribulos-1-ylimino)methylamino]-1-(5-phospho-beta-D-ribosyl)imidazole-4-carboxamide + L-glutamine = D-erythro-1-(imidazol-4-yl)glycerol 3-phosphate + 5-amino-1-(5-phospho-beta-D-ribosyl)imidazole-4-carboxamide + L-glutamate + H(+). The protein operates within amino-acid biosynthesis; L-histidine biosynthesis; L-histidine from 5-phospho-alpha-D-ribose 1-diphosphate: step 5/9. Functionally, IGPS catalyzes the conversion of PRFAR and glutamine to IGP, AICAR and glutamate. The HisF subunit catalyzes the cyclization activity that produces IGP and AICAR from PRFAR using the ammonia provided by the HisH subunit. The sequence is that of Imidazole glycerol phosphate synthase subunit HisF from Rhodococcus erythropolis (strain PR4 / NBRC 100887).